The primary structure comprises 409 residues: TAR DNA-binding protein 43 (409 aa).

RRM domains lie at 105–200 (SDLI…RCTE) and 191–262 (RKVF…TAEP). Disordered regions lie at residues 260 to 302 (AEPK…NQGG) and 341 to 409 (SQQN…GWGM). Basic and acidic residues predominate over residues 261 to 274 (EPKHNNNRQLERGG). The segment covering 281 to 292 (FGNQGYPNSRPS) has biased composition (polar residues). Composition is skewed to low complexity over residues 341-387 (SQQN…PNAG) and 395-409 (GFSS…GWGM).

In terms of assembly, homodimer.

The protein localises to the nucleus. It is found in the cytoplasm. Its subcellular location is the stress granule. It localises to the mitochondrion. Its function is as follows. Probably involved in transcriptional repression. May play a role in the maintenance of the circadian clock periodicity. The polypeptide is TAR DNA-binding protein 43 (tardbp) (Xenopus tropicalis (Western clawed frog)).